The chain runs to 351 residues: Hydroxymethylglutaryl-CoA synthase (351 aa).

The active-site Proton donor/acceptor is the glutamate 80. Cysteine 112 functions as the Acyl-thioester intermediate in the catalytic mechanism. (3S)-3-hydroxy-3-methylglutaryl-CoA-binding residues include cysteine 112 and serine 153. Arginine 199 contacts CoA. (3S)-3-hydroxy-3-methylglutaryl-CoA contacts are provided by threonine 201 and histidine 234. Histidine 234 (proton donor/acceptor) is an active-site residue. A CoA-binding site is contributed by lysine 239. (3S)-3-hydroxy-3-methylglutaryl-CoA-binding residues include arginine 243, asparagine 266, and serine 296.

It belongs to the thiolase-like superfamily. Archaeal HMG-CoA synthase family. In terms of assembly, interacts with acetoacetyl-CoA thiolase that catalyzes the precedent step in the pathway and with a DUF35 protein. The acetoacetyl-CoA thiolase/HMG-CoA synthase complex channels the intermediate via a fused CoA-binding site, which allows for efficient coupling of the endergonic thiolase reaction with the exergonic HMGCS reaction.

It carries out the reaction acetoacetyl-CoA + acetyl-CoA + H2O = (3S)-3-hydroxy-3-methylglutaryl-CoA + CoA + H(+). The protein operates within metabolic intermediate biosynthesis; (R)-mevalonate biosynthesis; (R)-mevalonate from acetyl-CoA: step 2/3. In terms of biological role, catalyzes the condensation of acetyl-CoA with acetoacetyl-CoA to form 3-hydroxy-3-methylglutaryl-CoA (HMG-CoA). Functions in the mevalonate (MVA) pathway leading to isopentenyl diphosphate (IPP), a key precursor for the biosynthesis of isoprenoid compounds that are building blocks of archaeal membrane lipids. In Thermoplasma volcanium (strain ATCC 51530 / DSM 4299 / JCM 9571 / NBRC 15438 / GSS1), this protein is Hydroxymethylglutaryl-CoA synthase.